Reading from the N-terminus, the 770-residue chain is NAD-dependent malic enzyme (770 aa).

Positions 1-440 (MNTGDKAKSQ…KLNRFVFRSG (440 aa)) are malic enzyme. Lysine 107 serves as the catalytic Proton acceptor. A divalent metal cation is bound by residues glutamate 149 and aspartate 150. Aspartate 175 and asparagine 300 together coordinate NAD(+). The interval 441-770 (FIMKPVFAAA…LAVVESSHPV (330 aa)) is phosphate acetyltransferase.

It in the N-terminal section; belongs to the malic enzymes family. The protein in the C-terminal section; belongs to the phosphate acetyltransferase and butyryltransferase family. In terms of assembly, homooctamer. Requires Mg(2+) as cofactor. Mn(2+) is required as a cofactor.

The catalysed reaction is (S)-malate + NAD(+) = pyruvate + CO2 + NADH. With respect to regulation, subject to substrate inhibition and shows allosteric regulation by acetyl-CoA. Its function is as follows. Required for symbiotic nitrogen fixation. Plays a key role in the conversion of malate to acetyl-CoA for efficient tricarboxylic acid cycle function in nitrogen-fixating bacteria. The chain is NAD-dependent malic enzyme (dme) from Rhizobium meliloti (strain 1021) (Ensifer meliloti).